The sequence spans 394 residues: ATP phosphoribosyltransferase regulatory subunit (394 aa).

Belongs to the class-II aminoacyl-tRNA synthetase family. HisZ subfamily. In terms of assembly, heteromultimer composed of HisG and HisZ subunits.

It localises to the cytoplasm. Its pathway is amino-acid biosynthesis; L-histidine biosynthesis; L-histidine from 5-phospho-alpha-D-ribose 1-diphosphate: step 1/9. Its function is as follows. Required for the first step of histidine biosynthesis. May allow the feedback regulation of ATP phosphoribosyltransferase activity by histidine. This is ATP phosphoribosyltransferase regulatory subunit from Pseudomonas paraeruginosa (strain DSM 24068 / PA7) (Pseudomonas aeruginosa (strain PA7)).